The chain runs to 400 residues: Elongation factor Tu (400 aa).

The tr-type G domain occupies 10–209; it reads KPHVNIGTIG…EVDKYIPTPE (200 aa). A G1 region spans residues 19–26; the sequence is GHVDHGKT. 19–26 provides a ligand contact to GTP; that stretch reads GHVDHGKT. A Mg(2+)-binding site is contributed by Thr-26. The segment at 60–64 is G2; it reads GITIN. The G3 stretch occupies residues 81 to 84; that stretch reads DCPG. GTP contacts are provided by residues 81–85 and 136–139; these read DCPGH and NKAD. The tract at residues 136–139 is G4; the sequence is NKAD. The interval 174–176 is G5; the sequence is SGL.

The protein belongs to the TRAFAC class translation factor GTPase superfamily. Classic translation factor GTPase family. EF-Tu/EF-1A subfamily. As to quaternary structure, monomer.

The protein resides in the cytoplasm. The catalysed reaction is GTP + H2O = GDP + phosphate + H(+). GTP hydrolase that promotes the GTP-dependent binding of aminoacyl-tRNA to the A-site of ribosomes during protein biosynthesis. In Heliobacterium modesticaldum (strain ATCC 51547 / Ice1), this protein is Elongation factor Tu.